A 95-amino-acid chain; its full sequence is Co-chaperonin GroES (95 aa).

The protein belongs to the GroES chaperonin family. Heptamer of 7 subunits arranged in a ring. Interacts with the chaperonin GroEL.

It localises to the cytoplasm. Its function is as follows. Together with the chaperonin GroEL, plays an essential role in assisting protein folding. The GroEL-GroES system forms a nano-cage that allows encapsulation of the non-native substrate proteins and provides a physical environment optimized to promote and accelerate protein folding. GroES binds to the apical surface of the GroEL ring, thereby capping the opening of the GroEL channel. This Oleidesulfovibrio alaskensis (strain ATCC BAA-1058 / DSM 17464 / G20) (Desulfovibrio alaskensis) protein is Co-chaperonin GroES.